The sequence spans 121 residues: Small ribosomal subunit protein uS13 (121 aa).

Residues Pro96–Lys121 are disordered. Over residues Ala106–Lys121 the composition is skewed to basic residues.

It belongs to the universal ribosomal protein uS13 family. In terms of assembly, part of the 30S ribosomal subunit. Forms a loose heterodimer with protein S19. Forms two bridges to the 50S subunit in the 70S ribosome.

Located at the top of the head of the 30S subunit, it contacts several helices of the 16S rRNA. In the 70S ribosome it contacts the 23S rRNA (bridge B1a) and protein L5 of the 50S subunit (bridge B1b), connecting the 2 subunits; these bridges are implicated in subunit movement. Contacts the tRNAs in the A and P-sites. The sequence is that of Small ribosomal subunit protein uS13 from Streptococcus pyogenes serotype M3 (strain SSI-1).